We begin with the raw amino-acid sequence, 715 residues long: Fatty acid oxidation complex subunit alpha (715 aa).

Positions 1-190 (MTTTSAFMLN…KAGLVDDVVP (190 aa)) are enoyl-CoA hydratase. Residues 306 to 714 (GPLNSVGILG…FWTNGETDQG (409 aa)) form a 3-hydroxyacyl-CoA dehydrogenase region.

The protein in the N-terminal section; belongs to the enoyl-CoA hydratase/isomerase family. This sequence in the central section; belongs to the 3-hydroxyacyl-CoA dehydrogenase family. As to quaternary structure, heterotetramer of two alpha chains (FadJ) and two beta chains (FadI).

The protein resides in the cytoplasm. The catalysed reaction is a (3S)-3-hydroxyacyl-CoA = a (2E)-enoyl-CoA + H2O. It carries out the reaction a 4-saturated-(3S)-3-hydroxyacyl-CoA = a (3E)-enoyl-CoA + H2O. It catalyses the reaction a (3S)-3-hydroxyacyl-CoA + NAD(+) = a 3-oxoacyl-CoA + NADH + H(+). The enzyme catalyses (3S)-3-hydroxybutanoyl-CoA = (3R)-3-hydroxybutanoyl-CoA. The protein operates within lipid metabolism; fatty acid beta-oxidation. Catalyzes the formation of a hydroxyacyl-CoA by addition of water on enoyl-CoA. Also exhibits 3-hydroxyacyl-CoA epimerase and 3-hydroxyacyl-CoA dehydrogenase activities. The chain is Fatty acid oxidation complex subunit alpha from Salmonella choleraesuis (strain SC-B67).